A 611-amino-acid polypeptide reads, in one-letter code: MSEFSQTALFPSLPRTARGTAVVLGNTPAGDKIQYCNGTSVYTVPVGSLTDTEIYTEHSHQTTVAKTSPSGYYCASGDVHGNVRIWDTTQTTHILKTTIPVFSGPVKDISWDSESKRIAAVGEGRERFGHVFLFDTGTSNGNLTGQARAMNSVDFKPSRPFRIISGSDDNTVAIFEGPPFKFKSTFGEHTKFVHSVRYNPDGSLFASTGGDGTIVLYNGVDGTKTGVFEDDSLKNVAHSGSVFGLTWSPDGTKIASASADKTIKIWNVATLKVEKTIPVGTRIEDQQLGIIWTKQALVSISANGFINFVNPELGSIDQVRYGHNKAITALSSSADGKTLFSADAEGHINSWDISTGISNRVFPDVHATMITGIKTTSKGDLFTVSWDDHLKVVPAGGSGVDSSKAVANKLSSQPLGLAVSADGDIAVAACYKHIAIYSHGKLTEVPISYNSSCVALSNDKQFVAVGGQDSKVHVYKLSGASVSEVKTIVHPAEITSVAFSNNGAFLVATDQSRKVIPYSVANNFELAHTNSWTFHTAKVACVSWSPDNVRLATGSLDNSVIVWNMNKPSDHPIIIKGAHAMSSVNSVIWLNETTIVSAGQDSNIKFWNVPF.

WD repeat units follow at residues 57–96 (EHSHQTTVAKTSPSGYYCASGDVHGNVRIWDTTQTTHILK), 145–185 (GQAR…FKST), 188–227 (EHTKFVHSVRYNPDGSLFASTGGDGTIVLYNGVDGTKTGV), 237–276 (AHSGSVFGLTWSPDGTKIASASADKTIKIWNVATLKVEKT), 322–361 (GHNKAITALSSSADGKTLFSADAEGHINSWDISTGISNRV), 446–485 (PISYNSSCVALSNDKQFVAVGGQDSKVHVYKLSGASVSEV), 489–528 (VHPAEITSVAFSNNGAFLVATDQSRKVIPYSVANNFELAH), 534–573 (FHTAKVACVSWSPDNVRLATGSLDNSVIVWNMNKPSDHPI), and 579–610 (HAMSSVNSVIWLNETTIVSAGQDSNIKFWNVP).

It belongs to the WD repeat AIP1 family.

Its subcellular location is the cytoplasm. The protein localises to the cytoskeleton. Functionally, induces disassembly of actin filaments in conjunction with ADF/cofilin family proteins. Regulator of actin organization in myofibrils. This is Actin-interacting protein 1 (unc-78) from Caenorhabditis elegans.